A 116-amino-acid chain; its full sequence is MNAKKEARLRRARRARAKIREQGVSRLSVNRTPRHIYAQIISPDGGQVLASASTLDKSLREGSTGNSDAAAKVGALIAERAKEAGITEVAFDRAGFKYHGRVKALADAAREGGLEF.

Belongs to the universal ribosomal protein uL18 family. As to quaternary structure, part of the 50S ribosomal subunit; part of the 5S rRNA/L5/L18/L25 subcomplex. Contacts the 5S and 23S rRNAs.

Functionally, this is one of the proteins that bind and probably mediate the attachment of the 5S RNA into the large ribosomal subunit, where it forms part of the central protuberance. The polypeptide is Large ribosomal subunit protein uL18 (Chromohalobacter salexigens (strain ATCC BAA-138 / DSM 3043 / CIP 106854 / NCIMB 13768 / 1H11)).